A 1770-amino-acid polypeptide reads, in one-letter code: AF4/FMR2 family member lilli (1770 aa).

3 stretches are compositionally biased toward low complexity: residues 1-19 (MAQQQQQQQQQQHLQHPHQ), 154-204 (LGHS…YLKQ), and 227-269 (PSSS…GTTP). Disordered stretches follow at residues 1-28 (MAQQQQQQQQQQHLQHPHQNTNSNNQLQ), 134-327 (SRHA…EKDI), 402-660 (TSLL…PGNV), 761-805 (LHSA…LQLP), 822-1173 (MQKA…KQGQ), and 1291-1390 (KHEH…QISK). Over residues 402–414 (TSLLTTPPHASQG) the composition is skewed to polar residues. Low complexity predominate over residues 434–447 (KAAAALSPTAAAKP). A compositionally biased stretch (basic and acidic residues) spans 448 to 461 (LKTEKNHTLEKQDS). The segment covering 463–474 (LENDLELSESED) has biased composition (acidic residues). Phosphoserine is present on residues S470 and S472. Positions 483–503 (SAGNSSNSSESDSSESGSESS) are enriched in low complexity. Residues 511–520 (QHHHHNHHHQ) show a composition bias toward basic residues. The segment covering 521–552 (QQQQQLQQQQQQQLLQQKQQHQQILQQQQRQL) has biased composition (low complexity). A compositionally biased stretch (gly residues) spans 582-614 (FGSGGAGNGGCSTASSGGGGGGSGSGGGSGSSS). Residues 615–625 (GIGTMSSGSSS) show a composition bias toward low complexity. 2 stretches are compositionally biased toward polar residues: residues 626 to 638 (NKTPSPTESNKWT) and 647 to 659 (ANQTSSESVSPGN). Residues 768-800 (SDSGTSGSGSTSSSSSSSDSAPGEVVPMPGPGE) are compositionally biased toward low complexity. The segment covering 844–854 (QRQKKPRKKKP) has biased composition (basic residues). A phosphoserine mark is found at S863 and S864. Composition is skewed to low complexity over residues 880–893 (AAAAAAAQAQATAT), 909–928 (QQQSGGSGNLSSASAGSSSQ), 994–1028 (ANASAVAAASSSSDEDSSSSTGSTGSKSSSSSSSS), 1071–1081 (SGSSSPSSSSS), and 1111–1131 (SQHSQQLSSSECSSSSGSSTS). The segment at residues 900 to 912 (KKGRGRPRKQQQS) is a DNA-binding region (a.T hook). 2 positions are modified to phosphoserine: S920 and S922. Basic and acidic residues-rich tracts occupy residues 1295 to 1312 (PHPVKPEPELDAGYESKF) and 1321 to 1355 (FQLKQERDRERERERDRDRERERERERDREREREQ). S1442 carries the post-translational modification Phosphoserine. Composition is skewed to low complexity over residues 1483-1499 (AAATATAATSTTGTSTA) and 1656-1676 (GNTPSSISPSNSVGSQGSGSN). Disordered regions lie at residues 1483–1502 (AAATATAATSTTGTSTAPPA) and 1656–1683 (GNTPSSISPSNSVGSQGSGSNTPPGKIV).

Belongs to the AF4 family.

The protein resides in the nucleus. Has a role in transcriptional regulation. Acts in parallel with the Ras/MAPK and the PI3K/PKB pathways in the control of cell identity and cellular growth. Essential for regulation of the cytoskeleton and cell growth but not for cell proliferation or growth rate. Required specifically for the microtubule-based basal transport of lipid droplets. Plays a partially redundant function downstream of Raf in cell fate specification in the developing eye. Pair-rule protein that regulates embryonic cellularization, gastrulation and segmentation. This Drosophila pseudoobscura pseudoobscura (Fruit fly) protein is AF4/FMR2 family member lilli.